The primary structure comprises 1055 residues: Focal adhesion kinase 1 (1055 aa).

Residues 1-29 (MAAAYLDPNLNHTPSSSTKTHLGTGTERS) form a disordered region. Position 2 is an N-acetylalanine (alanine 2). Tyrosine 5 carries the phosphotyrosine modification. Positions 10 to 27 (LNHTPSSSTKTHLGTGTE) are enriched in polar residues. Threonine 13 carries the post-translational modification Phosphothreonine. Serine 29 and serine 54 each carry phosphoserine. The FERM domain maps to 35–355 (RVLKVFHYFE…GYCRLVNGAT (321 aa)). Lysine 152 is covalently cross-linked (Glycyl lysine isopeptide (Lys-Gly) (interchain with G-Cter in SUMO)). Phosphotyrosine; by autocatalysis is present on tyrosine 397. At tyrosine 407 the chain carries Phosphotyrosine. The Protein kinase domain maps to 422-680 (IELGRCIGEG…ELKAQLSTIL (259 aa)). Residues 428 to 434 (IGEGQFG), lysine 454, and 500 to 502 (ELC) each bind ATP. Residue aspartate 546 is the Proton acceptor of the active site. Phosphotyrosine occurs at positions 570 and 576. Tyrosine 577 bears the Phosphotyrosine; by RET and SRC mark. Phosphoserine is present on serine 580. Basic and acidic residues predominate over residues 685-697 (VQQEERMRMESRR). Disordered regions lie at residues 685-734 (VQQE…PSPQ) and 837-923 (VRLS…LDRS). Positions 707–1055 (GSDEAPPKPS…LKMLGQTRPH (349 aa)) are interaction with TGFB1I1. Position 722 is a phosphoserine (serine 722). A Phosphoserine; by CDK5 modification is found at serine 732. Residues 837-849 (VRLSRGSIDREDG) show a composition bias toward basic and acidic residues. Serine 843 is modified (phosphoserine). Tyrosine 861 carries the phosphotyrosine modification. The span at 869–880 (PAAPPKKPPRPG) shows a compositional bias: pro residues. The segment covering 886-896 (SNLSSISSPAE) has biased composition (polar residues). The residue at position 913 (serine 913) is a Phosphoserine. Residues 915–1055 (PPTANLDRSN…LKMLGQTRPH (141 aa)) are interaction with ARHGEF28. Position 917 is a phosphothreonine (threonine 917). Tyrosine 928 carries the post-translational modification Phosphotyrosine.

The protein belongs to the protein kinase superfamily. Tyr protein kinase family. FAK subfamily. Interacts with GIT1. Component of a complex that contains at least FER, CTTN and PTK2/FAK1. Interacts with BMX. Interacts with STEAP4. Interacts with ZFYVE21. Interacts with ESR1. Interacts with PIK3R1 or PIK3R2. Interacts with FGR, FLT4 and RET. Interacts with EPHA2 in resting cells; activation of EPHA2 recruits PTPN11, leading to dephosphorylation of PTK2/FAK1 and dissociation of the complex. Interacts with EPHA1 (kinase activity-dependent). Interacts with P53/TP53. Interacts (via first Pro-rich region) with CAS family members (via SH3 domain), including BCAR1, BCAR3, and CASS4. Interacts with NEDD9 (via SH3 domain). Interacts with TGFB1I1. Interacts with SRC, GRB2 and GRB7. Interacts with ARHGEF28. Interacts with SHB. Part of a complex composed of THSD1, PTK2/FAK1, TLN1 and VCL. Interacts with PXN and TLN1. Interacts with SORBS1. Interacts with STAT1. Interacts with WASL. Interacts with ARHGAP26 and SHC1. Interacts with RB1CC1; this inhibits PTK2/FAK1 activity and activation of downstream signaling pathways. Interacts with ARHGEF7. Interacts with MDM2. Interacts with PIAS1. Interacts with DCC. Interacts with LPXN (via LD motif 3). Interacts with MISP. Interacts with EMP2; regulates PTK2 activation and localization. Interacts with DSCAM. Interacts with AMBRA1. Interacts (when tyrosine-phosphorylated) with tensin TNS1; the interaction is increased by phosphorylation of TNS1. Phosphorylated on tyrosine residues upon activation, e.g. upon integrin signaling. Tyr-397 is the major autophosphorylation site, but other kinases can also phosphorylate this residue. Phosphorylation at Tyr-397 promotes interaction with SRC and SRC family members, leading to phosphorylation at Tyr-576, Tyr-577 and at additional tyrosine residues. FGR promotes phosphorylation at Tyr-397 and Tyr-576. FER promotes phosphorylation at Tyr-577, Tyr-861 and Tyr-928, even when cells are not adherent. Tyr-397, Tyr-576 and Ser-722 are phosphorylated only when cells are adherent. Phosphorylation at Tyr-397 is important for interaction with BMX, PIK3R1 and SHC1. Phosphorylation at Tyr-928 is important for interaction with GRB2. Dephosphorylated by PTPN11; PTPN11 is recruited to PTK2 via EPHA2 (tyrosine phosphorylated). Microtubule-induced dephosphorylation at Tyr-397 is crucial for the induction of focal adhesion disassembly; this dephosphorylation could be catalyzed by PTPN11 and regulated by ZFYVE21. Phosphorylation on tyrosine residues is enhanced by NTN1. In terms of processing, sumoylated; this enhances autophosphorylation.

It is found in the cell junction. The protein resides in the focal adhesion. The protein localises to the cell membrane. Its subcellular location is the cytoplasm. It localises to the perinuclear region. It is found in the cell cortex. The protein resides in the cytoskeleton. The protein localises to the microtubule organizing center. Its subcellular location is the centrosome. It localises to the nucleus. It is found in the cilium basal body. The catalysed reaction is L-tyrosyl-[protein] + ATP = O-phospho-L-tyrosyl-[protein] + ADP + H(+). Its activity is regulated as follows. Subject to autoinhibition, mediated by interactions between the FERM domain and the kinase domain. Activated by autophosphorylation at Tyr-397. This promotes interaction with SRC and phosphorylation at Tyr-576 and Tyr-577 in the kinase activation loop by SRC. Phosphorylation at Tyr-397, Tyr-576 and Tyr-577 is required for maximal kinase activity. Functionally, non-receptor protein-tyrosine kinase that plays an essential role in regulating cell migration, adhesion, spreading, reorganization of the actin cytoskeleton, formation and disassembly of focal adhesions and cell protrusions, cell cycle progression, cell proliferation and apoptosis. Required for early embryonic development and placenta development. Required for embryonic angiogenesis, normal cardiomyocyte migration and proliferation, and normal heart development. Regulates axon growth and neuronal cell migration, axon branching and synapse formation; required for normal development of the nervous system. Plays a role in osteogenesis and differentiation of osteoblasts. Functions in integrin signal transduction, but also in signaling downstream of numerous growth factor receptors, G-protein coupled receptors (GPCR), EPHA2, netrin receptors and LDL receptors. Forms multisubunit signaling complexes with SRC and SRC family members upon activation; this leads to the phosphorylation of additional tyrosine residues, creating binding sites for scaffold proteins, effectors and substrates. Regulates numerous signaling pathways. Promotes activation of phosphatidylinositol 3-kinase and the AKT1 signaling cascade. Promotes activation of MAPK1/ERK2, MAPK3/ERK1 and the MAP kinase signaling cascade. Promotes localized and transient activation of guanine nucleotide exchange factors (GEFs) and GTPase-activating proteins (GAPs), and thereby modulates the activity of Rho family GTPases. Signaling via CAS family members mediates activation of RAC1. Phosphorylates NEDD9 following integrin stimulation. Recruits the ubiquitin ligase MDM2 to P53/TP53 in the nucleus, and thereby regulates P53/TP53 activity, P53/TP53 ubiquitination and proteasomal degradation. Phosphorylates SRC; this increases SRC kinase activity. Phosphorylates ACTN1, ARHGEF7, GRB7, RET and WASL. Promotes phosphorylation of PXN and STAT1; most likely PXN and STAT1 are phosphorylated by a SRC family kinase that is recruited to autophosphorylated PTK2/FAK1, rather than by PTK2/FAK1 itself. Promotes phosphorylation of BCAR1; GIT2 and SHC1; this requires both SRC and PTK2/FAK1. Promotes phosphorylation of BMX and PIK3R1. In terms of biological role, does not contain a kinase domain and inhibits PTK2/FAK1 phosphorylation and signaling. Its enhanced expression can attenuate the nuclear accumulation of LPXN and limit its ability to enhance serum response factor (SRF)-dependent gene transcription. In Rattus norvegicus (Rat), this protein is Focal adhesion kinase 1.